The following is a 416-amino-acid chain: Glutamyl-tRNA reductase (416 aa).

Substrate-binding positions include threonine 49–arginine 52, serine 105, glutamate 110–glutamine 112, and glutamine 116. Cysteine 50 serves as the catalytic Nucleophile. Residue glycine 185 to isoleucine 190 participates in NADP(+) binding.

The protein belongs to the glutamyl-tRNA reductase family. As to quaternary structure, homodimer.

It catalyses the reaction (S)-4-amino-5-oxopentanoate + tRNA(Glu) + NADP(+) = L-glutamyl-tRNA(Glu) + NADPH + H(+). Its pathway is porphyrin-containing compound metabolism; protoporphyrin-IX biosynthesis; 5-aminolevulinate from L-glutamyl-tRNA(Glu): step 1/2. Its function is as follows. Catalyzes the NADPH-dependent reduction of glutamyl-tRNA(Glu) to glutamate 1-semialdehyde (GSA). This is Glutamyl-tRNA reductase from Shewanella sp. (strain MR-7).